A 163-amino-acid chain; its full sequence is Small ribosomal subunit protein uS9 (163 aa).

The span at 1–25 (MAENTNNSAVTETEETTAAFTTETN) shows a compositional bias: low complexity. Residues 1–40 (MAENTNNSAVTETEETTAAFTTETNSGAGTGTSTIAPGYG) are disordered.

Belongs to the universal ribosomal protein uS9 family.

In Bifidobacterium animalis subsp. lactis (strain AD011), this protein is Small ribosomal subunit protein uS9.